A 287-amino-acid chain; its full sequence is mRNA-capping enzyme small subunit (287 aa).

Heterodimer of a large and a small subunit.

It localises to the virion. It carries out the reaction a 5'-end (5'-triphosphoguanosine)-ribonucleoside in mRNA + S-adenosyl-L-methionine = a 5'-end (N(7)-methyl 5'-triphosphoguanosine)-ribonucleoside in mRNA + S-adenosyl-L-homocysteine. Functionally, catalyzes the last reaction in the mRNA cap formation pathway. The sequence is that of mRNA-capping enzyme small subunit from Erythrocebus patas (Red guenon).